We begin with the raw amino-acid sequence, 188 residues long: Putative manganese efflux pump MntP (188 aa).

Helical transmembrane passes span 3-23 (WLTI…VALA), 39-59 (LGFH…LLGM), 65-85 (ISAY…GRMV), 104-124 (GMTM…VGLS), 125-145 (IAML…VAGV), and 167-187 (ICGG…HTLL).

The protein belongs to the MntP (TC 9.B.29) family.

Its subcellular location is the cell inner membrane. In terms of biological role, probably functions as a manganese efflux pump. The sequence is that of Putative manganese efflux pump MntP from Citrifermentans bemidjiense (strain ATCC BAA-1014 / DSM 16622 / JCM 12645 / Bem) (Geobacter bemidjiensis).